We begin with the raw amino-acid sequence, 242 residues long: ATP synthase subunit a (242 aa).

The next 6 membrane-spanning stretches (helical) occupy residues 29 to 49 (SAAYMLLASVLALTYFYLAFS), 84 to 104 (FVPVIFTLFVFILFCNLFGMI), 114 to 134 (IIITFALAILVFLMVTIVGFV), 140 to 160 (FLSLFLPHGTPLWLAPLMIII), 189 to 209 (VIASFVITLMIYLKFLPIPLM), and 210 to 230 (VILIGFEIFVAILQAYIFTIL).

It belongs to the ATPase A chain family. F-type ATPases have 2 components, CF(1) - the catalytic core - and CF(0) - the membrane proton channel. CF(1) has five subunits: alpha(3), beta(3), gamma(1), delta(1), epsilon(1). CF(0) has three main subunits: a(1), b(2) and c(9-12). The alpha and beta chains form an alternating ring which encloses part of the gamma chain. CF(1) is attached to CF(0) by a central stalk formed by the gamma and epsilon chains, while a peripheral stalk is formed by the delta and b chains.

The protein resides in the cell inner membrane. Key component of the proton channel; it plays a direct role in the translocation of protons across the membrane. The sequence is that of ATP synthase subunit a from Rickettsia bellii (strain OSU 85-389).